Here is an 87-residue protein sequence, read N- to C-terminus: UPF0250 protein Spro_1197 (87 aa).

It belongs to the UPF0250 family.

The polypeptide is UPF0250 protein Spro_1197 (Serratia proteamaculans (strain 568)).